Reading from the N-terminus, the 346-residue chain is Histidinol-phosphate aminotransferase (346 aa).

At Lys209 the chain carries N6-(pyridoxal phosphate)lysine.

It belongs to the class-II pyridoxal-phosphate-dependent aminotransferase family. Histidinol-phosphate aminotransferase subfamily. Homodimer. Pyridoxal 5'-phosphate serves as cofactor.

The enzyme catalyses L-histidinol phosphate + 2-oxoglutarate = 3-(imidazol-4-yl)-2-oxopropyl phosphate + L-glutamate. Its pathway is amino-acid biosynthesis; L-histidine biosynthesis; L-histidine from 5-phospho-alpha-D-ribose 1-diphosphate: step 7/9. The chain is Histidinol-phosphate aminotransferase from Vibrio vulnificus (strain YJ016).